The following is a 251-amino-acid chain: CDP-diacylglycerol pyrophosphatase (251 aa).

Residues 4-24 traverse the membrane as a helical segment; that stretch reads AGLLFLVMIVIAVVAAGIGYW.

The protein belongs to the Cdh family.

It localises to the cell inner membrane. It carries out the reaction a CDP-1,2-diacyl-sn-glycerol + H2O = a 1,2-diacyl-sn-glycero-3-phosphate + CMP + 2 H(+). The protein operates within phospholipid metabolism; CDP-diacylglycerol degradation; phosphatidate from CDP-diacylglycerol: step 1/1. This is CDP-diacylglycerol pyrophosphatase from Escherichia coli (strain SE11).